Here is a 149-residue protein sequence, read N- to C-terminus: Calmodulin (149 aa).

Position 2 is an N-acetylalanine (Ala2). EF-hand domains lie at 8 to 43, 44 to 79, 81 to 116, and 117 to 149; these read EQIAEFKEAFSLFDKDGDGTITTKELGTVMRSLGQN, PTEAELADMINEVDADGNGTIDFPEFLTMMARKMKD, DSEEEILEAFKVFDKDGNGFISAAELRHIMTNLGEK, and LTDEEVDEMIREADIDGDGQINYEEFVKMMMSK. The Ca(2+) site is built by Asp21, Asp23, Asp25, Thr27, Glu32, Asp57, Asp59, Asn61, Thr63, Glu68, Asp94, Asp96, Asn98, and Glu105. Lys116 carries the post-translational modification N6,N6,N6-trimethyllysine. Asp130, Asp132, Asp134, Gln136, and Glu141 together coordinate Ca(2+).

This sequence belongs to the calmodulin family.

Its function is as follows. Calmodulin mediates the control of a large number of enzymes, ion channels and other proteins by Ca(2+). Among the enzymes to be stimulated by the calmodulin-Ca(2+) complex are a number of protein kinases and phosphatases. The protein is Calmodulin (cam) of Saccharina japonica (Sweet kelp).